The following is a 122-amino-acid chain: 5'-AMP-activated protein kinase subunit beta-1 (122 aa).

Residues S5, S61, S66, and S73 each carry the phosphoserine modification. The segment at 33 to 122 (EVNDKASAQA…TVNNIIQVKK (90 aa)) is glycogen-binding domain. At T113 the chain carries Phosphothreonine.

This sequence belongs to the 5'-AMP-activated protein kinase beta subunit family. As to quaternary structure, AMPK is a heterotrimer of an alpha catalytic subunit (PRKAA1 or PRKAA2), a beta (PRKAB1 or PRKAB2) and a gamma non-catalytic subunits (PRKAG1, PRKAG2 or PRKAG3). Interacts with FNIP1 and FNIP2. In terms of processing, phosphorylated when associated with the catalytic subunit (PRKAA1 or PRKAA2). Phosphorylated by ULK1; leading to negatively regulate AMPK activity and suggesting the existence of a regulatory feedback loop between ULK1 and AMPK.

Non-catalytic subunit of AMP-activated protein kinase (AMPK), an energy sensor protein kinase that plays a key role in regulating cellular energy metabolism. In response to reduction of intracellular ATP levels, AMPK activates energy-producing pathways and inhibits energy-consuming processes: inhibits protein, carbohydrate and lipid biosynthesis, as well as cell growth and proliferation. AMPK acts via direct phosphorylation of metabolic enzymes, and by longer-term effects via phosphorylation of transcription regulators. Also acts as a regulator of cellular polarity by remodeling the actin cytoskeleton; probably by indirectly activating myosin. Beta non-catalytic subunit acts as a scaffold on which the AMPK complex assembles, via its C-terminus that bridges alpha (PRKAA1 or PRKAA2) and gamma subunits (PRKAG1, PRKAG2 or PRKAG3). This is 5'-AMP-activated protein kinase subunit beta-1 (PRKAB1) from Sus scrofa (Pig).